Reading from the N-terminus, the 660-residue chain is Acetyl-coenzyme A synthetase (660 aa).

CoA contacts are provided by residues 197 to 200 (RGGK) and Thr317. ATP contacts are provided by residues 397 to 399 (GEP), 421 to 426 (DTFWQT), Asp512, and Arg528. A CoA-binding site is contributed by Ser536. Arg539 is a binding site for ATP. Mg(2+) is bound by residues Val550 and Val555. The residue at position 625 (Lys625) is an N6-acetyllysine.

Belongs to the ATP-dependent AMP-binding enzyme family. The cofactor is Mg(2+). In terms of processing, acetylated. Deacetylation by the SIR2-homolog deacetylase activates the enzyme.

The enzyme catalyses acetate + ATP + CoA = acetyl-CoA + AMP + diphosphate. Catalyzes the conversion of acetate into acetyl-CoA (AcCoA), an essential intermediate at the junction of anabolic and catabolic pathways. AcsA undergoes a two-step reaction. In the first half reaction, AcsA combines acetate with ATP to form acetyl-adenylate (AcAMP) intermediate. In the second half reaction, it can then transfer the acetyl group from AcAMP to the sulfhydryl group of CoA, forming the product AcCoA. This Cupriavidus pinatubonensis (strain JMP 134 / LMG 1197) (Cupriavidus necator (strain JMP 134)) protein is Acetyl-coenzyme A synthetase.